The primary structure comprises 615 residues: 1-deoxy-D-xylulose-5-phosphate synthase (615 aa).

Thiamine diphosphate is bound by residues H72 and 111–113 (GHS). D142 contributes to the Mg(2+) binding site. Thiamine diphosphate is bound by residues 143-144 (GA), N171, Y278, and E360. Residue N171 coordinates Mg(2+).

It belongs to the transketolase family. DXPS subfamily. In terms of assembly, homodimer. Mg(2+) is required as a cofactor. The cofactor is thiamine diphosphate.

It carries out the reaction D-glyceraldehyde 3-phosphate + pyruvate + H(+) = 1-deoxy-D-xylulose 5-phosphate + CO2. It functions in the pathway metabolic intermediate biosynthesis; 1-deoxy-D-xylulose 5-phosphate biosynthesis; 1-deoxy-D-xylulose 5-phosphate from D-glyceraldehyde 3-phosphate and pyruvate: step 1/1. Its function is as follows. Catalyzes the acyloin condensation reaction between C atoms 2 and 3 of pyruvate and glyceraldehyde 3-phosphate to yield 1-deoxy-D-xylulose-5-phosphate (DXP). This is 1-deoxy-D-xylulose-5-phosphate synthase from Campylobacter jejuni (strain RM1221).